Here is a 177-residue protein sequence, read N- to C-terminus: Large ribosomal subunit protein uL6 (177 aa).

Belongs to the universal ribosomal protein uL6 family. As to quaternary structure, part of the 50S ribosomal subunit.

Functionally, this protein binds to the 23S rRNA, and is important in its secondary structure. It is located near the subunit interface in the base of the L7/L12 stalk, and near the tRNA binding site of the peptidyltransferase center. The sequence is that of Large ribosomal subunit protein uL6 from Alkalilimnicola ehrlichii (strain ATCC BAA-1101 / DSM 17681 / MLHE-1).